A 289-amino-acid polypeptide reads, in one-letter code: ATP synthase gamma chain (289 aa).

This sequence belongs to the ATPase gamma chain family. As to quaternary structure, F-type ATPases have 2 components, CF(1) - the catalytic core - and CF(0) - the membrane proton channel. CF(1) has five subunits: alpha(3), beta(3), gamma(1), delta(1), epsilon(1). CF(0) has three main subunits: a, b and c.

It localises to the cell inner membrane. Its function is as follows. Produces ATP from ADP in the presence of a proton gradient across the membrane. The gamma chain is believed to be important in regulating ATPase activity and the flow of protons through the CF(0) complex. The polypeptide is ATP synthase gamma chain (Coxiella burnetii (strain CbuG_Q212) (Coxiella burnetii (strain Q212))).